Here is a 1370-residue protein sequence, read N- to C-terminus: MAYSFTERKRIRKSFGNRESVLTVPYLLQMQKDAYIAFLQADRAPQKRMVEGLQAAFQNAFPIVSHNGFVEMKFIEYNLAKPAFDVRECQTRGLTFASAVRAKVQLIIYDRESSTSQSKVVKEVKEQEVYMGEVPLMTDKGSFVINGTERVIVSQLHRSPGVFFEHDKGKTHSSGKLLFSARIIPYRGSWLDFEFDPKDILYFRVDRRRKMPVTILLKAIGLNHESILANFFVFDNFRLMDSGAQMEFVAERMRGEVARFDLTDKAGKVVVAKDKRITVRHTRELEQSGTTSISVPEDFLIGRVVAKNIIDTDTGEIIAKANDELTELLLKKLRTAGIQNLQVLYTNELDQGAYISQTLRADETADEFAARVAIYRMMRPGEPPTEDAVQALFQRLFYNPDTYDLSRVGRMKFNARVGRDESTGPMVMTNEDILAVVKILVDLRNGNGEVDDIDHLGNRRVRCVGELAENQYRTGLARIEKAVKERLGQAEQEPLMPHDLINSKPISAALKEFFGASQLSQFMDQTNPLAEITHKRRVSALGPGGLTRERAGFEVRDVHVTHYGRVCPIETPEGPNIGLINSLALYARLNEYGFIETPYRRVADSKVTMEIDYLSAIEEGKYVIAQANAALDNEGRLTGDLVSAREKGESILVSAERVQYMDVSPAQIVSVAASLVPFLEHDDANRALMGANMSRQAVPVLRPEKPLVGTGIERVAAVDSGTVVTATRGGVVDYVDATRIVVRVNDAEALAGEIGVDIYNLIKYQRSNQNTNIHQRPIVKMGDKLAKGDVVADGASTDLGEIAIGQNMLIGFMPWNGYNFEDSILISERVVAEDRYTSIHIEELVVMARDTKLGSEEITRDIPNLSEQQLNRLDESGIIYVGAEVQPGDTLVGKVTPKGETTLTPEEKLLRAIFGEKASDVKDTSLRVSQGSSGTVIDVQVFTREGITRDKRAQQIIDDELKRYRLDLNDQLRIVEADAFDRIEKLLIGKIANGGPKKLAKGTKLDKAYLTDVEKYHWFDIRPADDEVASQLESIKNSMEQTRHSFDLSFEEKRKKLTQGDELPSGVLKMVKVYLAVKRRLQPGDKMAGRHGNKGVVSKIVPVEDMPHMADGTPCDIVLNPLGVPSRMNVGQVLEVHLGWAAKGLGQRIGDMLQAESKVAELRQFMDTLYNKSGRTEDLASLSDEQVVEMAQNLTTGVPFATPVFDGASEADIMTMLQLAYPDAVAKAKGLTPTRTQAQLYDGRTGDAFERTTTVGYMHFLKLHHLVDDKMHARSTGPYSLVTQQPLGGKAQFGGQRFGEMEVWALEAYGAAYVLQEMLTVKSDDVVGRTKVYESIVKGEHAITAGMPESFNVLVKEIRSLGIDMELERS.

Belongs to the RNA polymerase beta chain family. In terms of assembly, the RNAP catalytic core consists of 2 alpha, 1 beta, 1 beta' and 1 omega subunit. When a sigma factor is associated with the core the holoenzyme is formed, which can initiate transcription.

It catalyses the reaction RNA(n) + a ribonucleoside 5'-triphosphate = RNA(n+1) + diphosphate. Functionally, DNA-dependent RNA polymerase catalyzes the transcription of DNA into RNA using the four ribonucleoside triphosphates as substrates. This Polaromonas naphthalenivorans (strain CJ2) protein is DNA-directed RNA polymerase subunit beta.